Consider the following 239-residue polypeptide: MRRAVVLFSGGLDSTASLYWALKHYDEVIMLTINYGSQEERVTNKVAEFFSRELNVPLKIVKIDFLHEFSKIAGSKLVEGNVPEVTARELEDFEKAKETARSVWIPARNFVLIGVAASLLDALGGGDIIVGFNKEEGETFPDNTKEFVDRINSALKYATMNEVRVVAPLIELDKKGIARLLKELNAKYEYSNSCYNPQGFTEDGKPIHCGRCESCVRRHRGLIEGIGEDKTVYLVTPKV.

8–18 (FSGGLDSTASL) contributes to the ATP binding site. Residues C194, C209, C212, and C215 each contribute to the Zn(2+) site.

Belongs to the QueC family.

The enzyme catalyses 7-carboxy-7-deazaguanine + NH4(+) + ATP = 7-cyano-7-deazaguanine + ADP + phosphate + H2O + H(+). It participates in purine metabolism; 7-cyano-7-deazaguanine biosynthesis. In terms of biological role, catalyzes the ATP-dependent conversion of 7-carboxy-7-deazaguanine (CDG) to 7-cyano-7-deazaguanine (preQ(0)). This Pyrococcus abyssi (strain GE5 / Orsay) protein is 7-cyano-7-deazaguanine synthase.